We begin with the raw amino-acid sequence, 120 residues long: Aspartate 1-decarboxylase (120 aa).

The active-site Schiff-base intermediate with substrate; via pyruvic acid is the Ser25. Ser25 bears the Pyruvic acid (Ser) mark. Thr57 contacts substrate. Tyr58 serves as the catalytic Proton donor. 73 to 75 (GAA) is a binding site for substrate.

This sequence belongs to the PanD family. In terms of assembly, heterooctamer of four alpha and four beta subunits. The cofactor is pyruvate. In terms of processing, is synthesized initially as an inactive proenzyme, which is activated by self-cleavage at a specific serine bond to produce a beta-subunit with a hydroxyl group at its C-terminus and an alpha-subunit with a pyruvoyl group at its N-terminus.

It localises to the cytoplasm. The catalysed reaction is L-aspartate + H(+) = beta-alanine + CO2. It participates in cofactor biosynthesis; (R)-pantothenate biosynthesis; beta-alanine from L-aspartate: step 1/1. Functionally, catalyzes the pyruvoyl-dependent decarboxylation of aspartate to produce beta-alanine. The chain is Aspartate 1-decarboxylase from Deinococcus geothermalis (strain DSM 11300 / CIP 105573 / AG-3a).